Reading from the N-terminus, the 295-residue chain is MNTHKQEDIQLVIITGMSGAGKTVAIQSFEDLGYFCVDNLPPSLLPKFLELMKESNSKMSKVALVMDLRGREFFDSLIAALDEMSDLGWITPRILFLDANDKVLVSRYKETRRSHPLATTGLPLEGIAMERDLLEELKGRAQMIFDTSDLKPKQLREKIVAHFATSQGQVFTVNVMSFGFKYGLPIDADLVFDVRFLPNPYYIESMRPQTGNDEEVRSYVMKWSETQKFTEKLIDLLSFMLPSYKREGKSQLVIAIGCTGGQHRSVTLANYLSEYFKNDYYTHVTHRDIEKRSRK.

An ATP-binding site is contributed by 16–23; it reads GMSGAGKT. Residue 67–70 participates in GTP binding; sequence DLRG.

It belongs to the RapZ-like family.

Displays ATPase and GTPase activities. In Bacillus pumilus (strain SAFR-032), this protein is Nucleotide-binding protein BPUM_3115.